Reading from the N-terminus, the 533-residue chain is Bifunctional aspartate aminotransferase and L-aspartate beta-decarboxylase (533 aa).

The L-aspartate site is built by glycine 115 and asparagine 256. Position 315 is an N6-(pyridoxal phosphate)lysine (lysine 315). Residue arginine 497 participates in L-aspartate binding.

It belongs to the class-I pyridoxal-phosphate-dependent aminotransferase family. As to quaternary structure, homododecamer. Pyridoxal 5'-phosphate is required as a cofactor.

It catalyses the reaction L-aspartate + H(+) = L-alanine + CO2. The catalysed reaction is L-aspartate + 2-oxoglutarate = oxaloacetate + L-glutamate. Functionally, bifunctional enzyme that has both L-aspartate decarboxylase and transaminase activity. This Comamonas testosteroni (Pseudomonas testosteroni) protein is Bifunctional aspartate aminotransferase and L-aspartate beta-decarboxylase.